Consider the following 319-residue polypeptide: NADH-quinone oxidoreductase subunit H 2 (319 aa).

The next 9 helical transmembrane spans lie at 1-21 (MIGMIITATISVALIMVLLVL), 77-97 (ILAPAVAATPVLAGFGVVAIG), 107-127 (VGLLFLLGMLGLTAYAAVLGA), 147-167 (LAYEVFLGLSLMGVVMIAGSF), 179-199 (VWFVVLQPLGMALFTIAGIAA), 214-234 (LIAGFITEYTGMSFGLFFLGE), 238-258 (VLLVSALAVTLFFGGWLGPWL), 262-282 (VWFGLKTAVIAVAFVWIRATL), and 293-313 (FAWKVALPLSLLNLMLTGIVV).

It belongs to the complex I subunit 1 family. As to quaternary structure, NDH-1 is composed of 14 different subunits. Subunits NuoA, H, J, K, L, M, N constitute the membrane sector of the complex.

It localises to the cell inner membrane. It carries out the reaction a quinone + NADH + 5 H(+)(in) = a quinol + NAD(+) + 4 H(+)(out). Functionally, NDH-1 shuttles electrons from NADH, via FMN and iron-sulfur (Fe-S) centers, to quinones in the respiratory chain. The immediate electron acceptor for the enzyme in this species is believed to be ubiquinone. Couples the redox reaction to proton translocation (for every two electrons transferred, four hydrogen ions are translocated across the cytoplasmic membrane), and thus conserves the redox energy in a proton gradient. This subunit may bind ubiquinone. The protein is NADH-quinone oxidoreductase subunit H 2 of Rhodopseudomonas palustris (strain ATCC BAA-98 / CGA009).